The sequence spans 29 residues: Cyclotide mden-B (29 aa).

The segment at residues 1-29 (GLPICGETCFTGKCYTPGCTCSYPICKKN) is a cross-link (cyclopeptide (Gly-Asn)). 3 disulfide bridges follow: C5–C19, C9–C21, and C14–C26.

Belongs to the cyclotide family. Moebius subfamily. This is a cyclic peptide.

Probably participates in a plant defense mechanism. This is Cyclotide mden-B from Melicytus dentatus (Tree violet).